Here is an 878-residue protein sequence, read N- to C-terminus: Alanine--tRNA ligase (878 aa).

Zn(2+) contacts are provided by His-565, His-569, Cys-667, and His-671.

Belongs to the class-II aminoacyl-tRNA synthetase family. The cofactor is Zn(2+).

Its subcellular location is the cytoplasm. It catalyses the reaction tRNA(Ala) + L-alanine + ATP = L-alanyl-tRNA(Ala) + AMP + diphosphate. In terms of biological role, catalyzes the attachment of alanine to tRNA(Ala) in a two-step reaction: alanine is first activated by ATP to form Ala-AMP and then transferred to the acceptor end of tRNA(Ala). Also edits incorrectly charged Ser-tRNA(Ala) and Gly-tRNA(Ala) via its editing domain. This is Alanine--tRNA ligase from Desulforamulus reducens (strain ATCC BAA-1160 / DSM 100696 / MI-1) (Desulfotomaculum reducens).